The sequence spans 987 residues: 110 kDa U5 small nuclear ribonucleoprotein component CLO (987 aa).

Positions 1–54 (MESSLYDEFGNYVGPEIESDRDSDDEVEDEDLQDKHLEENGSDGEQGPGGSNGW) are disordered. The span at 17-32 (IESDRDSDDEVEDEDL) shows a compositional bias: acidic residues. One can recognise a tr-type G domain in the interval 136–422 (ALVRNVALVG…LGVTLSNSAY (287 aa)). Residues 145 to 152 (GHLQHGKT) form a G1 region. A GTP-binding site is contributed by 145–152 (GHLQHGKT). The segment at 189–193 (NISIK) is G2. Positions 215 to 218 (DTPG) are G3. Residues 215-219 (DTPGH) and 269-272 (NKVD) each bind GTP. The G4 stretch occupies residues 269-272 (NKVD). The G5 stretch occupies residues 395–397 (YSQ).

It belongs to the TRAFAC class translation factor GTPase superfamily. Classic translation factor GTPase family. In terms of assembly, interacts with BRR2A and PRP8A. Expressed in flower buds, open flowers and siliques. Expressed at low levels in rosettes leaves, cauline leaves and stems.

It localises to the nucleus speckle. Splicing factor involved in pre-mRNA splicing and component of the spliceosome. Essential for reproduction. In female gametophyte, is necessary for the egg cell and central cell fate determination and hence reproductive success. Involved in a mechanism that prevents accessory cells from adopting gametic cell fate. Is necessary to restrict LIS expression to interfere with egg-cell specification. Probable component of U5 small nuclear ribonucleoprotein (snRNP) that is required for pre-mRNA splicing. Plays an essential role in female gametogenesis and embryo development. Required for the control of polarized cell growth and cell proliferation during floral organ morphogenesis. This is 110 kDa U5 small nuclear ribonucleoprotein component CLO from Arabidopsis thaliana (Mouse-ear cress).